A 122-amino-acid chain; its full sequence is Large ribosomal subunit protein bL19 (122 aa).

Belongs to the bacterial ribosomal protein bL19 family.

Its function is as follows. This protein is located at the 30S-50S ribosomal subunit interface and may play a role in the structure and function of the aminoacyl-tRNA binding site. The chain is Large ribosomal subunit protein bL19 from Chlamydia felis (strain Fe/C-56) (Chlamydophila felis).